Consider the following 427-residue polypeptide: 3-deoxy-D-manno-octulosonic acid transferase (427 aa).

A helical; Signal-anchor transmembrane segment spans residues 4 to 24; the sequence is FFYTSLLLICQPLILCFIGLL. E62 serves as the catalytic Proton acceptor. CMP contacts are provided by residues 270–271, 311–313, and 337–340; these read PR, MGE, and NPLE.

The protein belongs to the glycosyltransferase group 1 family. Glycosyltransferase 30 subfamily.

The protein localises to the cell inner membrane. The catalysed reaction is lipid IVA (E. coli) + CMP-3-deoxy-beta-D-manno-octulosonate = alpha-Kdo-(2-&gt;6)-lipid IVA (E. coli) + CMP + H(+). The protein operates within bacterial outer membrane biogenesis; LPS core biosynthesis. Functionally, involved in lipopolysaccharide (LPS) biosynthesis. Catalyzes the transfer of a single 3-deoxy-D-manno-octulosonate (Kdo) residue from CMP-Kdo to lipid IV(A), the tetraacyldisaccharide-1,4'-bisphosphate precursor of lipid A. Is strictly monofunctional, i.e. is capable of adding only a single Kdo residue to the acceptor lipid. The chain is 3-deoxy-D-manno-octulosonic acid transferase (waaA) from Haemophilus influenzae (strain ATCC 51907 / DSM 11121 / KW20 / Rd).